A 1098-amino-acid polypeptide reads, in one-letter code: MAPNYFQKPEAALKRAEELIQVGKESDALDTLHDTIKARRHKQWTTVHEQIMIKHMELCVDLKKQHLAKDALFQYKALTQQINVKSLETVVEHFLKLAEQRTEDAQKQSIEKVEEIGDLDQGDVPERLLLAVVSGAAAQDRMDRTVLAPWLRFLWDSYRNCLELLRNNAQVEQLYHTISRHSFSFCLRYQRRTEFRKLCDLLRMHLNQIQKHQYAPNVNSFRVKLTSPESLTLMQDTRLVQLDTAIQMELWQEAYKSAEDVHGMMQLSKDKDKRTVKPSSYVNYYDKLALVFWKAGNRLFHAAALLQKFIIYKDMKKSFTQEEAQEQATRVLLATLSIPEGSDLPSDLSRNLDIEEQHVANMRLLSNLLRLPIAPTKVGILKEAARIGVPEAAGQVAKDLFKLLESNFSPLRVAKDVQSVLDTITRPDHLQYVESLQAVAAVKALKQVSVIYEAISWERIRKIIPFYHDLALERLVVEASKHRIVKAQLDHRADCVRFGSSDATLAGGVDEYDNNEGFTGDDTQLGVEGVRNHLEAMYTRLRVLVEGLDSEKRRKEIVKKIENHVTSYEKNRVTEIERIHRRKKMLENYKENWERVKAEKAATAATEQAKREEAARAEEMKRLDEQNKESERKRKQAEQEEIQKKIKRDQLHKMQQNVIYQAIIKEKGLEQFRDMDPEQVLREQRERLDKERAETQRRLQQQEKKFDHHIRALHLEEMNERRAVMHMRLNEAPRLHEEYENKRIEKEIAAHENHVKLWSMWDQVREATLDWVETVKVENQENLEKKISDWEVKLEAVRNSRLAERAEKRKKERKEAAMQAKIAEERKRREEEERARQAVIDSQRRPHGERGQRREMENSAAMQDSDWRRNAPPRDSMPQREPRPMRDGPPREPFREMPSSKADTDSSWRSSAQPTRKPDDRRSDDFRRDDGPRRSDDHRRNDEFRRSDDFRRNDDFRRDGPPRPMSKADTDQKWERGAVTKTVVSPPKTENQPAPAAEAPKADGPRRFIPPALRNKPAGGGDEQPAPQRGANVTSPPDRAPGLRGPPGPGGRDLPPRDLPPRDGPRDIPRRDGPRRDGPNRNSGANNAGNADSANWRR.

The PCI domain maps to 324-503 (AQEQATRVLL…DCVRFGSSDA (180 aa)). A coiled-coil region spans residues 574–844 (TEIERIHRRK…ARQAVIDSQR (271 aa)). 2 disordered regions span residues 599–648 (EKAA…KIKR) and 805–1098 (RAEK…NWRR). 3 stretches are compositionally biased toward basic and acidic residues: residues 608–648 (QAKR…KIKR), 805–857 (RAEK…REME), and 877–895 (MPQR…EPFR). The span at 905–914 (DSSWRSSAQP) shows a compositional bias: polar residues. Basic and acidic residues-rich tracts occupy residues 916-978 (RKPD…ERGA) and 1054-1079 (LPPR…RDGP). The span at 1080–1098 (NRNSGANNAGNADSANWRR) shows a compositional bias: low complexity.

This sequence belongs to the eIF-3 subunit A family. In terms of assembly, component of the eukaryotic translation initiation factor 3 (eIF-3) complex.

The protein localises to the cytoplasm. Its function is as follows. RNA-binding component of the eukaryotic translation initiation factor 3 (eIF-3) complex, which is involved in protein synthesis of a specialized repertoire of mRNAs and, together with other initiation factors, stimulates binding of mRNA and methionyl-tRNAi to the 40S ribosome. The eIF-3 complex specifically targets and initiates translation of a subset of mRNAs involved in cell proliferation. This is Eukaryotic translation initiation factor 3 subunit A from Caenorhabditis briggsae.